The primary structure comprises 296 residues: Nucleotide-binding protein SUB0630 (296 aa).

Residue G13 to T20 participates in ATP binding. A GTP-binding site is contributed by D63 to S66.

Belongs to the RapZ-like family.

Displays ATPase and GTPase activities. In Streptococcus uberis (strain ATCC BAA-854 / 0140J), this protein is Nucleotide-binding protein SUB0630.